Here is a 268-residue protein sequence, read N- to C-terminus: Basic endochitinase CHB4 (268 aa).

Positions 1–24 (MALTKLSLVLFLCFLGLYSETVKS) are cleaved as a signal peptide. One can recognise a Chitin-binding type-1 domain in the interval 25–59 (QNCGCAPNLCCSQFGYCGSTDAYCGTGCRSGPCRS). Disulfide bonds link Cys-27-Cys-35, Cys-29-Cys-41, Cys-34-Cys-48, Cys-52-Cys-57, Cys-92-Cys-137, Cys-150-Cys-159, and Cys-236-Cys-268. Residues 71–268 (SVGSIVTQAF…GVDPGPNLSC (198 aa)) are catalytic. The Proton donor role is filled by Glu-132. A glycan (N-linked (GlcNAc...) asparagine) is linked at Asn-265.

It belongs to the glycosyl hydrolase 19 family. Chitinase class I subfamily.

The protein localises to the secreted. The protein resides in the extracellular space. It carries out the reaction Random endo-hydrolysis of N-acetyl-beta-D-glucosaminide (1-&gt;4)-beta-linkages in chitin and chitodextrins.. In terms of biological role, defense against chitin-containing fungal pathogens. This Brassica napus (Rape) protein is Basic endochitinase CHB4.